Consider the following 506-residue polypeptide: Apolipoprotein N-acyltransferase (506 aa).

6 consecutive transmembrane segments (helical) span residues 26-46 (FAPY…LILI), 66-86 (FASG…MPLA), 89-109 (LFLM…FTWS), 113-133 (FFAK…WLIA), 166-186 (GVEL…YAVI), and 192-212 (MLLI…WDWV). A CN hydrolase domain is found at 225–471 (IQGNVDQNLK…TAVLRAELTP (247 aa)). The active-site Proton acceptor is the glutamate 264. The active site involves lysine 330. The Nucleophile role is filled by cysteine 382. A helical membrane pass occupies residues 479 to 499 (HQLGSWPLYIWVALSLALAWW).

This sequence belongs to the CN hydrolase family. Apolipoprotein N-acyltransferase subfamily.

Its subcellular location is the cell inner membrane. It catalyses the reaction N-terminal S-1,2-diacyl-sn-glyceryl-L-cysteinyl-[lipoprotein] + a glycerophospholipid = N-acyl-S-1,2-diacyl-sn-glyceryl-L-cysteinyl-[lipoprotein] + a 2-acyl-sn-glycero-3-phospholipid + H(+). It participates in protein modification; lipoprotein biosynthesis (N-acyl transfer). In terms of biological role, catalyzes the phospholipid dependent N-acylation of the N-terminal cysteine of apolipoprotein, the last step in lipoprotein maturation. The chain is Apolipoprotein N-acyltransferase from Vibrio vulnificus (strain CMCP6).